Consider the following 167-residue polypeptide: Heme-degrading monooxygenase (167 aa).

Residues 1–50 are important for catalysis; the sequence is MKKVFITTGTEHYLRQLMANYTGGNVTLLQNFSQSLLYQESTGEKLFQEG. In terms of domain architecture, ABM spans 67–154; sequence VVVFEYIHLR…NNTQSGFSHE (88 aa).

Belongs to the antibiotic biosynthesis monooxygenase family. As to quaternary structure, monomer.

It localises to the cytoplasm. In terms of biological role, catalyzes the degradation of heme to biliverdin in the presence of a suitable electron donor such as ascorbate, with the subsequent release of iron. Hardly any CO is released by the heme degradation reaction. Binds heme. Allows bacterial pathogens to use the host heme as an iron source. Release of iron from heme may play a crucial role in the pathogenicity of L.monocytogenes. This chain is Heme-degrading monooxygenase, found in Listeria monocytogenes serovar 1/2a (strain ATCC BAA-679 / EGD-e).